Reading from the N-terminus, the 173-residue chain is ATP synthase subunit b (173 aa).

The chain crosses the membrane as a helical span at residues 25-45 (LINLVIVIGVLYWFLKGFLGG).

It belongs to the ATPase B chain family. In terms of assembly, F-type ATPases have 2 components, F(1) - the catalytic core - and F(0) - the membrane proton channel. F(1) has five subunits: alpha(3), beta(3), gamma(1), delta(1), epsilon(1). F(0) has four main subunits: a(1), b(1), b'(1) and c(10-14). The alpha and beta chains form an alternating ring which encloses part of the gamma chain. F(1) is attached to F(0) by a central stalk formed by the gamma and epsilon chains, while a peripheral stalk is formed by the delta, b and b' chains.

The protein localises to the cellular thylakoid membrane. In terms of biological role, f(1)F(0) ATP synthase produces ATP from ADP in the presence of a proton or sodium gradient. F-type ATPases consist of two structural domains, F(1) containing the extramembraneous catalytic core and F(0) containing the membrane proton channel, linked together by a central stalk and a peripheral stalk. During catalysis, ATP synthesis in the catalytic domain of F(1) is coupled via a rotary mechanism of the central stalk subunits to proton translocation. Component of the F(0) channel, it forms part of the peripheral stalk, linking F(1) to F(0). In Synechococcus sp. (strain CC9311), this protein is ATP synthase subunit b.